A 453-amino-acid polypeptide reads, in one-letter code: Vacuolar cation/proton exchanger 1b (453 aa).

The Cytoplasmic portion of the chain corresponds to 1 to 67; that stretch reads MPVSRMMMES…LRSLLANLND (67 aa). The chain crosses the membrane as a helical span at residues 68–85; it reads VLLTTRLFLLFPAVLLAI. Over 86 to 91 the chain is Extracellular; it reads AATYLH. A helical transmembrane segment spans residues 92-109; the sequence is FGQVWVFVLSLIGLVPLA. Residues 110 to 126 are Cytoplasmic-facing; it reads ERLSFLTEQIAFYTGPT. A helical membrane pass occupies residues 127 to 147; sequence VGGLLNATFGNVTEVIIALLA. Residues 136–171 form a cation selection region; that stretch reads GNVTEVIIALLALREGKIEVVKCSLLGSILSNLLLV. Residues 148-160 are Extracellular-facing; the sequence is LREGKIEVVKCSL. The chain crosses the membrane as a helical span at residues 161–181; that stretch reads LGSILSNLLLVLGTSLFLAGI. Over 182–194 the chain is Cytoplasmic; the sequence is ANLRAHQPYDTKQ. Residues 195 to 215 traverse the membrane as a helical segment; the sequence is AHVNTALLMLAVLCHSLPLML. Residues 216 to 232 are Extracellular-facing; sequence RYAVTSGDHAIVSGDAA. Residues 233–253 traverse the membrane as a helical segment; that stretch reads LHLSRACSILMLIAYLAYLFF. The Cytoplasmic portion of the chain corresponds to 254–283; it reads QLNTHRQLFEPQQVEDDDDDDLVIAQDDEP. Residues 284 to 304 form a helical membrane-spanning segment; the sequence is VLGFSSAMIWLALMTLLTALL. The Extracellular portion of the chain corresponds to 305 to 327; sequence SGYVVSTIEAASESWELSVSFIS. Residues 328–348 form a helical membrane-spanning segment; the sequence is IILLPIVGNAAEHAGAVIFAL. Residues 335–370 form a cation selection region; it reads GNAAEHAGAVIFALKNKMDITLGVSLGSATQISMFV. Residues 349–364 are Cytoplasmic-facing; sequence KNKMDITLGVSLGSAT. Residues 365–385 form a helical membrane-spanning segment; that stretch reads QISMFVVPVSVIVAWTMGIPM. Residues 386–388 lie on the Extracellular side of the membrane; that stretch reads DLD. Residues 389–409 traverse the membrane as a helical segment; it reads FNLLETGSLFLAILVTAFTLQ. The Cytoplasmic portion of the chain corresponds to 410 to 414; sequence EGESH. A helical membrane pass occupies residues 415–435; sequence YLKGLILVLCYAVISVCFFVI. The Extracellular portion of the chain corresponds to 436 to 453; sequence RRRSAGGTDGVHHLDVIV.

It belongs to the Ca(2+):cation antiporter (CaCA) (TC 2.A.19) family. Cation/proton exchanger (CAX) subfamily. In terms of tissue distribution, expressed in embryo and roots.

It localises to the vacuole membrane. In terms of biological role, vacuolar cation/proton exchanger (CAX). Translocates Ca(2+) and other metal ions into vacuoles using the proton gradient formed by H(+)-ATPase and H(+)-pyrophosphatase. The protein is Vacuolar cation/proton exchanger 1b (CAX1b) of Oryza sativa subsp. japonica (Rice).